Reading from the N-terminus, the 249-residue chain is Proteasome subunit alpha type-7-1 (249 aa).

S177 carries the post-translational modification Phosphoserine.

It belongs to the peptidase T1A family. In terms of assembly, the 26S proteasome consists of a 20S proteasome core and two 19S regulatory subunits. The 20S proteasome core is composed of 28 subunits that are arranged in four stacked rings, resulting in a barrel-shaped structure. The two end rings are each formed by seven alpha subunits, and the two central rings are each formed by seven beta subunits. The catalytic chamber with the active sites is on the inside of the barrel. Interacts with PI31; this interaction is reduced by PI31 ADP-ribosylation.

The protein resides in the cytoplasm. It is found in the nucleus. In terms of biological role, the proteasome is a multicatalytic proteinase complex which is characterized by its ability to cleave peptides with Arg, Phe, Tyr, Leu, and Glu adjacent to the leaving group at neutral or slightly basic pH. The proteasome has an ATP-dependent proteolytic activity. The protein is Proteasome subunit alpha type-7-1 (Prosalpha4) of Drosophila melanogaster (Fruit fly).